The chain runs to 650 residues: Chaperone protein DnaK (650 aa).

Position 200 is a phosphothreonine; by autocatalysis (Thr-200). Residues 612–632 are compositionally biased toward low complexity; that stretch reads GEGATAGAAAGAGAAGGQQAQ. The interval 612 to 650 is disordered; it reads GEGATAGAAAGAGAAGGQQAQPQDDNVVDAEFKEVNDKK. Residues 641–650 are compositionally biased toward basic and acidic residues; sequence AEFKEVNDKK.

It belongs to the heat shock protein 70 family.

Its function is as follows. Acts as a chaperone. The chain is Chaperone protein DnaK from Cupriavidus necator (strain ATCC 17699 / DSM 428 / KCTC 22496 / NCIMB 10442 / H16 / Stanier 337) (Ralstonia eutropha).